The sequence spans 446 residues: Exodeoxyribonuclease 7 large subunit (446 aa).

This sequence belongs to the XseA family. In terms of assembly, heterooligomer composed of large and small subunits.

The protein localises to the cytoplasm. The catalysed reaction is Exonucleolytic cleavage in either 5'- to 3'- or 3'- to 5'-direction to yield nucleoside 5'-phosphates.. Its function is as follows. Bidirectionally degrades single-stranded DNA into large acid-insoluble oligonucleotides, which are then degraded further into small acid-soluble oligonucleotides. The sequence is that of Exodeoxyribonuclease 7 large subunit from Streptococcus agalactiae serotype III (strain NEM316).